The chain runs to 554 residues: Glucose-6-phosphate isomerase (554 aa).

Glu-358 (proton donor) is an active-site residue. Residues His-389 and Lys-515 contribute to the active site. Positions 527–540 (ADNSPAPQSDSSTD) are enriched in polar residues. Positions 527-554 (ADNSPAPQSDSSTDALVRRYRSERGRTS) are disordered. Residues 542-554 (LVRRYRSERGRTS) show a composition bias toward basic and acidic residues.

This sequence belongs to the GPI family.

It localises to the cytoplasm. The catalysed reaction is alpha-D-glucose 6-phosphate = beta-D-fructose 6-phosphate. The protein operates within carbohydrate biosynthesis; gluconeogenesis. Its pathway is carbohydrate degradation; glycolysis; D-glyceraldehyde 3-phosphate and glycerone phosphate from D-glucose: step 2/4. In terms of biological role, catalyzes the reversible isomerization of glucose-6-phosphate to fructose-6-phosphate. This Mycobacterium avium (strain 104) protein is Glucose-6-phosphate isomerase.